The chain runs to 261 residues: tRNA pseudouridine synthase A (261 aa).

The Nucleophile role is filled by D53. Y111 provides a ligand contact to substrate.

It belongs to the tRNA pseudouridine synthase TruA family. In terms of assembly, homodimer.

It carries out the reaction uridine(38/39/40) in tRNA = pseudouridine(38/39/40) in tRNA. Functionally, formation of pseudouridine at positions 38, 39 and 40 in the anticodon stem and loop of transfer RNAs. The chain is tRNA pseudouridine synthase A from Shouchella clausii (strain KSM-K16) (Alkalihalobacillus clausii).